Reading from the N-terminus, the 138-residue chain is Large ribosomal subunit protein uL16 (138 aa).

It belongs to the universal ribosomal protein uL16 family. As to quaternary structure, part of the 50S ribosomal subunit.

Functionally, binds 23S rRNA and is also seen to make contacts with the A and possibly P site tRNAs. The sequence is that of Large ribosomal subunit protein uL16 from Hyphomonas neptunium (strain ATCC 15444).